We begin with the raw amino-acid sequence, 1000 residues long: MVQSPMISCPLKQTNEIDWIQPLKDYIRQSYGEDPERYSQECATLNRLRQDMRGAGKDSATGRDLLYRYYGQLELLDLRFPVDENHIKISFTWYDAFTHKPTSQYSLAFEKASIIFNISAVLSCHAANQNRADDIGLKTAYHNFQASAGMFTYINENFLHAPSTDLNRETVKTLINITLAQGQEVFLEKQIMDHKKAGFLAKLASQASYLYAQAIEGTQEHAKGIFDKSWVTLLQVKSAHMGSVASYYQALADGESGSHGVAVARLQLAEKHSTSALSWAKSLPSSISPNTNLTSEAGPSLVDIVKFHLANVQSQLATFVKDNDFIYHQPVPSEAGLSAVSKLPAAKAIPVSELYQGQDIQRIIGPDIFQKLVPMSVTETASLYDEEKAKLIRAETEKVETADGEMAASLDYFKLPGSLNILKGGMDQEVMVDEEFQRWCQELAGHDSFAKAFDTLQDRKSEVLATLDQCAKQLDLEESVCEKMRSKYGADWSQQPSSRLNMTLRNDIRTYRDTVHEASASDAQLSATLRQYESDFDEMRSAGETDEADVLFQRAMIKAGSKQGKTKNGVTSPYSATEGSLLDDVYDDGVPSVAEQIARVESILKKLNLVKRERTQVLKDLKEKVRNDDISNVLILNKKSITGQESQLFEAELEKFHPHQMRIVQANHKQTALMKELTKTYGDLLQDKRVRAEQSKYESITRQRNSVMARYKKIYDSFNNLGSGIKQAQTFYAEMTETVDSLKKNVDTFINNRRSEGAQLLGQIEREKAAGTSDHEEREREKLRQLMERLSTEPKPPSVPPGSSTAGPAKAKSPPPPVKAPAYPTNIAPPKASPHFAPTVPQQHGTPVSHSPAPYSQYVPPGAGVSYLPSQSFQQGAAAPLSEGYNPMAYPIPASSMSPPPSQPFYSPTPTPFYTSPTPPVPSGQYMPQGYVPPPPPPRPQQPTYPPSTGPFPSGPGGYAQSRPYGSSQHHKAHSQSSPQTGPSVSANSSDPWAGLNAWK.

Positions 5-406 (PMISCPLKQT…EKVETADGEM (402 aa)) constitute a BRO1 domain. The stretch at 732–793 (YAEMTETVDS…RQLMERLSTE (62 aa)) forms a coiled coil. 2 disordered regions span residues 760–857 (LLGQ…PYSQ) and 891–1000 (PIPA…NAWK). The segment covering 764 to 792 (IEREKAAGTSDHEEREREKLRQLMERLST) has biased composition (basic and acidic residues). Residues 840 to 849 (VPQQHGTPVS) are compositionally biased toward polar residues. Composition is skewed to pro residues over residues 898 to 922 (SPPP…PPVP) and 931 to 954 (YVPP…PFPS). A compositionally biased stretch (polar residues) spans 981–991 (TGPSVSANSSD).

Belongs to the BRO1 family.

Its subcellular location is the cytoplasm. The protein localises to the endosome. Its function is as follows. Involved in concentration and sorting of cargo proteins of the multivesicular body (MVB) for incorporation into intralumenal vesicles. The sequence is that of Vacuolar protein-sorting protein bro1 (broA) from Emericella nidulans (strain FGSC A4 / ATCC 38163 / CBS 112.46 / NRRL 194 / M139) (Aspergillus nidulans).